Reading from the N-terminus, the 317-residue chain is DNA repair nuclease/redox regulator APEX1 (317 aa).

The interval 1-32 (MPKRGKRAAAEDGEEPKSEPETKKSKGAAKKT) is necessary for interaction with YBX1, binding to RNA, association together with NPM1 to rRNA, endoribonuclease activity on abasic RNA and localization in the nucleoli. Residues 1–57 (MPKRGKRAAAEDGEEPKSEPETKKSKGAAKKTEKEAAGEGPVLYEDPPDQKTSASGK) are disordered. An N6-acetyllysine; by EP300 modification is found at Lys6. The short motif at 8–12 (AAAED) is the Nuclear localization signal (NLS) element. Basic and acidic residues predominate over residues 15–37 (EPKSEPETKKSKGAAKKTEKEAA). Phosphoserine is present on Ser18. The segment at 22-32 (TKKSKGAAKKT) is necessary for interaction with NPM1 and for efficient rRNA binding. N6-acetyllysine is present on residues Lys26, Lys30, Lys31, and Lys34. Ser53 carries the post-translational modification Phosphoserine. Residues 63 to 79 (ICSWNVDGLRAWIKKKG) carry the Nuclear export signal (NES) motif. Cys64 bears the S-nitrosocysteine; alternate mark. An intrachain disulfide couples Cys64 to Cys92. A Mg(2+)-binding site is contributed by Asp69. An S-nitrosocysteine; alternate modification is found at Cys92. Glu95 contributes to the Mg(2+) binding site. Tyr170 is an active-site residue. N6-acetyllysine is present on Lys196. Mg(2+) is bound by residues Asp209 and Asn211. The active-site Proton donor/acceptor is the Asp209. Phosphothreonine; by CDK5 is present on Thr232. The mitochondrial targeting sequence (MTS) stretch occupies residues 288–317 (HSLLPALCDSKIRSKALGSDHCPITLYLAL). Mg(2+) is bound at residue Asp307. Cys309 is subject to S-nitrosocysteine.

This sequence belongs to the DNA repair enzymes AP/ExoA family. As to quaternary structure, monomer. Homodimer; disulfide-linked. Component of the SET complex, composed of at least APEX1, SET, ANP32A, HMGB2, NME1 and TREX1. Associates with the dimer XRCC5/XRCC6 in a DNA-dependent manner. Interacts with SIRT1; the interaction is increased in the context of genotoxic stress. Interacts with HDAC1, HDAC2 and HDAC3; the interactions are not dependent on the APEX1 acetylation status. Interacts with XRCC1; the interaction is induced by SIRT1 and increased with the APEX1 acetylated form. Interacts with NPM1 (via N-terminal domain); the interaction is RNA-dependent and decreases in hydrogen peroxide-damaged cells. Interacts (via N-terminus) with YBX1 (via C-terminus); the interaction is increased in presence of APEX1 acetylated. Interacts with HNRNPL; the interaction is DNA-dependent. Interacts (via N-terminus) with KPNA1 and KPNA2. Interacts with TXN; the interaction stimulates the FOS/JUN AP-1 complex DNA-binding activity in a redox-dependent manner. Interacts with GZMA, KRT8, MDM2, POLB, PRDX6, PRPF19, RPLP0, TOMM20 and WDR77. Binds to CDK5. Mg(2+) is required as a cofactor. It depends on Mn(2+) as a cofactor. Phosphorylated. Phosphorylation by kinase PKC or casein kinase CK2 results in enhanced redox activity that stimulates binding of the FOS/JUN AP-1 complex to its cognate binding site. AP-endodeoxyribonuclease activity is not affected by CK2-mediated phosphorylation. Phosphorylation of Thr-232 by CDK5 in response to MPP(+)/MPTP (1-methyl-4-phenylpyridinium) reduces AP-endodeoxyribonuclease activity resulting in accumulation of DNA damage and contributing to neuronal death. Post-translationally, acetylated on Lys-6. Acetylation is increased by the transcriptional coactivator EP300 acetyltransferase, genotoxic agents like H(2)O(2) and methyl methanesulfonate (MMS). Acetylation increases its binding affinity to the negative calcium response element (nCaRE) DNA promoter. The acetylated form induces a stronger binding of YBX1 to the Y-box sequence in the MDR1 promoter than the unacetylated form. Deacetylated on lysines. Lys-6 is deacetylated by SIRT1. In terms of processing, cleaved at Lys-30 by granzyme A to create the mitochondrial form; leading in reduction of binding to DNA, AP endodeoxyribonuclease activity, redox activation of transcription factors and to enhanced cell death. Cleaved by granzyme K; leading to intracellular ROS accumulation and enhanced cell death after oxidative stress. Cys-64 and Cys-92 are nitrosylated in response to nitric oxide (NO) and lead to the exposure of the nuclear export signal (NES). Post-translationally, ubiquitinated by MDM2; leading to translocation to the cytoplasm and proteasomal degradation.

It localises to the nucleus. The protein localises to the nucleolus. The protein resides in the nucleus speckle. It is found in the endoplasmic reticulum. Its subcellular location is the cytoplasm. It localises to the mitochondrion. It catalyses the reaction a deoxyribonucleotide-2'-deoxyribose-5'-monophosphate-DNA + H2O = a 5'-end 2'-deoxyribose-5'-monophosphate-DNA + a 3'-end 2'-deoxyribonucleotide-DNA + H(+). The enzyme catalyses Exonucleolytic cleavage in the 3'- to 5'-direction to yield nucleoside 5'-phosphates.. It carries out the reaction a 3'-end 2'-deoxyribonucleotide-3'-phosphoglycolate-DNA + H2O = 2-phosphoglycolate + a 3'-end 2'-deoxyribonucleotide-DNA + H(+). The catalysed reaction is a 3'-end 2'-deoxyribonucleotide-8-oxoguanine-DNA + H2O = 8-oxo-dGMP + a 3'-end 2'-deoxyribonucleotide-DNA + H(+). Its activity is regulated as follows. NPM1 stimulates endodeoxyribonuclease activity on double-stranded DNA with AP sites, but inhibits endoribonuclease activity on single-stranded RNA containing AP sites. Functionally, multifunctional protein that plays a central role in the cellular response to oxidative stress. The two major activities of APEX1 are DNA repair and redox regulation of transcriptional factors. Functions as an apurinic/apyrimidinic (AP) endodeoxyribonuclease in the base excision repair (BER) pathway of DNA lesions induced by oxidative and alkylating agents. Initiates repair of AP sites in DNA by catalyzing hydrolytic incision of the phosphodiester backbone immediately adjacent to the damage, generating a single-strand break with 5'-deoxyribose phosphate and 3'-hydroxyl ends. Also incises at AP sites in the DNA strand of DNA/RNA hybrids, single-stranded DNA regions of R-loop structures, and single-stranded RNA molecules. Operates at switch sites of immunoglobulin (Ig) constant regions where it mediates Ig isotype class switch recombination. Processes AP sites induced by successive action of AICDA and UNG. Generates staggered nicks in opposite DNA strands resulting in the formation of double-strand DNA breaks that are finally resolved via non-homologous end joining repair pathway. Has 3'-5' exodeoxyribonuclease activity on mismatched deoxyribonucleotides at the 3' termini of nicked or gapped DNA molecules during short-patch BER. Possesses DNA 3' phosphodiesterase activity capable of removing lesions (such as phosphoglycolate and 8-oxoguanine) blocking the 3' side of DNA strand breaks. Also acts as an endoribonuclease involved in the control of single-stranded RNA metabolism. Plays a role in regulating MYC mRNA turnover by preferentially cleaving in between UA and CA dinucleotides of the MYC coding region determinant (CRD). In association with NMD1, plays a role in the rRNA quality control process during cell cycle progression. Acts as a loading factor for POLB onto non-incised AP sites in DNA and stimulates the 5'-terminal deoxyribose 5'-phosphate (dRp) excision activity of POLB. Exerts reversible nuclear redox activity to regulate DNA binding affinity and transcriptional activity of transcriptional factors by controlling the redox status of their DNA-binding domain, such as the FOS/JUN AP-1 complex after exposure to IR. Involved in calcium-dependent down-regulation of parathyroid hormone (PTH) expression by binding to negative calcium response elements (nCaREs). Together with HNRNPL or the dimer XRCC5/XRCC6, associates with nCaRE, acting as an activator of transcriptional repression. May also play a role in the epigenetic regulation of gene expression by participating in DNA demethylation. Stimulates the YBX1-mediated MDR1 promoter activity, when acetylated at Lys-6 and Lys-7, leading to drug resistance. Plays a role in protection from granzyme-mediated cellular repair leading to cell death. Binds DNA and RNA. Associates, together with YBX1, on the MDR1 promoter. Together with NPM1, associates with rRNA. This is DNA repair nuclease/redox regulator APEX1 (Apex1) from Rattus norvegicus (Rat).